The sequence spans 166 residues: Dihydrofolate reductase (166 aa).

The DHFR domain occupies 6–164 (KISLIVAMDK…YDYYFHIYER (159 aa)). Substrate is bound at residue 10–12 (IVA). NADP(+) is bound by residues 11 to 12 (VA) and 19 to 24 (IGKDND). Asp32 contributes to the substrate binding site. 48–51 (GRKN) contacts NADP(+). Substrate is bound at residue Arg62. Residues 67–70 (LTRD) and 100–105 (FGGEQI) contribute to the NADP(+) site. Substrate is bound at residue Thr119.

It belongs to the dihydrofolate reductase family.

It catalyses the reaction (6S)-5,6,7,8-tetrahydrofolate + NADP(+) = 7,8-dihydrofolate + NADPH + H(+). It participates in cofactor biosynthesis; tetrahydrofolate biosynthesis; 5,6,7,8-tetrahydrofolate from 7,8-dihydrofolate: step 1/1. In terms of biological role, key enzyme in folate metabolism. Catalyzes an essential reaction for de novo glycine and purine synthesis, and for DNA precursor synthesis. The protein is Dihydrofolate reductase (dfrD) of Staphylococcus haemolyticus.